We begin with the raw amino-acid sequence, 217 residues long: Peptide methionine sulfoxide reductase MsrA 1 (217 aa).

Cys-54 is an active-site residue.

This sequence belongs to the MsrA Met sulfoxide reductase family.

It carries out the reaction L-methionyl-[protein] + [thioredoxin]-disulfide + H2O = L-methionyl-(S)-S-oxide-[protein] + [thioredoxin]-dithiol. The enzyme catalyses [thioredoxin]-disulfide + L-methionine + H2O = L-methionine (S)-S-oxide + [thioredoxin]-dithiol. In terms of biological role, has an important function as a repair enzyme for proteins that have been inactivated by oxidation. Catalyzes the reversible oxidation-reduction of methionine sulfoxide in proteins to methionine. This is Peptide methionine sulfoxide reductase MsrA 1 (msrA1) from Caulobacter vibrioides (strain ATCC 19089 / CIP 103742 / CB 15) (Caulobacter crescentus).